We begin with the raw amino-acid sequence, 433 residues long: MRNLLRGMLVVICCMAGIAAADEKNILVTSGSDRATPIAVVPFGWQGGSVLPDDMAQIIGDDLRNSGYYAPIPKQNMISLPTQASEVIFRDWKALGAQYVMVGSIVPAGGRLQVQYALFNVATEQQVLTGSVSGSVDQLRDMSHYISDQSFEKLTGIKGAFSTRLLYVTAERFSVNNTRYTLQRSDYDGARAVTLLQSREPILSPRFAPDGKRIAYVSFEQKRPRIFVQHIDTGRREQITNFEGLNGAPAWSPDGTRLAFVLSKDGNPDIYVMNMASRQISRVTSGPGINTEPFWGKDGSTIYFTSDRGGKPQVYKSNINGGGAERVTFIGNYNANPKLSADEKTLVMIHRQDGFTNFRVAAQDLQRGSVKILTDTNLDESATVAPNGTMVIYATRQQGRGVLMLVSINGRVRLPLPTAQGEVREPSWSPYLN.

The first 21 residues, 1 to 21, serve as a signal peptide directing secretion; sequence MRNLLRGMLVVICCMAGIAAA.

Belongs to the TolB family. As to quaternary structure, the Tol-Pal system is composed of five core proteins: the inner membrane proteins TolA, TolQ and TolR, the periplasmic protein TolB and the outer membrane protein Pal. They form a network linking the inner and outer membranes and the peptidoglycan layer.

It localises to the periplasm. In terms of biological role, part of the Tol-Pal system, which plays a role in outer membrane invagination during cell division and is important for maintaining outer membrane integrity. The sequence is that of Tol-Pal system protein TolB from Pseudomonas fluorescens (strain ATCC BAA-477 / NRRL B-23932 / Pf-5).